Here is a 483-residue protein sequence, read N- to C-terminus: Probable cytosol aminopeptidase (483 aa).

Residues Lys252 and Asp257 each contribute to the Mn(2+) site. The active site involves Lys264. The Mn(2+) site is built by Asp275, Asp334, and Glu336. Residue Arg338 is part of the active site.

Belongs to the peptidase M17 family. Mn(2+) serves as cofactor.

The protein localises to the cytoplasm. The catalysed reaction is Release of an N-terminal amino acid, Xaa-|-Yaa-, in which Xaa is preferably Leu, but may be other amino acids including Pro although not Arg or Lys, and Yaa may be Pro. Amino acid amides and methyl esters are also readily hydrolyzed, but rates on arylamides are exceedingly low.. It carries out the reaction Release of an N-terminal amino acid, preferentially leucine, but not glutamic or aspartic acids.. Presumably involved in the processing and regular turnover of intracellular proteins. Catalyzes the removal of unsubstituted N-terminal amino acids from various peptides. This Legionella pneumophila (strain Paris) protein is Probable cytosol aminopeptidase.